Here is a 285-residue protein sequence, read N- to C-terminus: 2-hydroxy-6-oxononadienedioate/2-hydroxy-6-oxononatrienedioate hydrolase 1 (285 aa).

The Proton acceptor role is filled by His265.

It belongs to the AB hydrolase superfamily. MhpC family. Homodimer.

It catalyses the reaction (2Z,4E)-2-hydroxy-6-oxonona-2,4-dienedioate + H2O = (2Z)-2-hydroxypenta-2,4-dienoate + succinate + H(+). It carries out the reaction (2Z,4E,7E)-2-hydroxy-6-oxonona-2,4,7-trienedioate + H2O = (2Z)-2-hydroxypenta-2,4-dienoate + fumarate + H(+). Its pathway is aromatic compound metabolism; 3-phenylpropanoate degradation. Functionally, catalyzes the cleavage of the C5-C6 bond of 2-hydroxy-6-oxononadienedioate and 2-hydroxy-6-oxononatrienedioate, a dienol ring fission product of the bacterial meta-cleavage pathway for degradation of phenylpropionic acid. This Pseudomonas putida (Arthrobacter siderocapsulatus) protein is 2-hydroxy-6-oxononadienedioate/2-hydroxy-6-oxononatrienedioate hydrolase 1.